We begin with the raw amino-acid sequence, 122 residues long: LYR motif-containing protein 1 (122 aa).

Belongs to the complex I LYR family. In terms of tissue distribution, high levels in adipose tissue.

The protein resides in the nucleus. Functionally, may promote cell proliferation and inhibition of apoptosis of preadipocytes. The chain is LYR motif-containing protein 1 (LYRM1) from Homo sapiens (Human).